The primary structure comprises 748 residues: Photosystem I P700 chlorophyll a apoprotein A1 (748 aa).

Transmembrane regions (helical) follow at residues V70–A93, L156–H179, L195–M219, T291–Y309, W346–Y369, L385–V411, A433–H455, and F530–L548. C572 and C581 together coordinate [4Fe-4S] cluster. 2 helical membrane passes run H588–W609 and L662–F684. H673 is a chlorophyll a' binding site. Chlorophyll a-binding residues include M681 and Y689. Phylloquinone is bound at residue W690. The chain crosses the membrane as a helical span at residues A722 to A742.

The protein belongs to the PsaA/PsaB family. The PsaA/B heterodimer binds the P700 chlorophyll special pair and subsequent electron acceptors. PSI consists of a core antenna complex that captures photons, and an electron transfer chain that converts photonic excitation into a charge separation. The eukaryotic PSI reaction center is composed of at least 11 subunits. It depends on P700 is a chlorophyll a/chlorophyll a' dimer, A0 is one or more chlorophyll a, A1 is one or both phylloquinones and FX is a shared 4Fe-4S iron-sulfur center. as a cofactor.

The protein resides in the plastid. It localises to the chloroplast thylakoid membrane. It catalyses the reaction reduced [plastocyanin] + hnu + oxidized [2Fe-2S]-[ferredoxin] = oxidized [plastocyanin] + reduced [2Fe-2S]-[ferredoxin]. In terms of biological role, psaA and PsaB bind P700, the primary electron donor of photosystem I (PSI), as well as the electron acceptors A0, A1 and FX. PSI is a plastocyanin-ferredoxin oxidoreductase, converting photonic excitation into a charge separation, which transfers an electron from the donor P700 chlorophyll pair to the spectroscopically characterized acceptors A0, A1, FX, FA and FB in turn. Oxidized P700 is reduced on the lumenal side of the thylakoid membrane by plastocyanin. This is Photosystem I P700 chlorophyll a apoprotein A1 from Chara vulgaris (Common stonewort).